The primary structure comprises 457 residues: Probable ECA polymerase (457 aa).

11 consecutive transmembrane segments (helical) span residues Leu-3–Leu-23, Met-41–Phe-61, Val-65–Tyr-85, Ile-118–Leu-138, Gly-154–Leu-174, Trp-181–Gly-201, Ile-206–Trp-226, Met-227–Tyr-247, Leu-340–Ile-360, Tyr-377–Ala-397, and Val-408–Leu-428.

This sequence belongs to the WzyE family. In terms of assembly, probably part of a complex composed of WzxE, WzyE and WzzE.

It is found in the cell inner membrane. Its pathway is bacterial outer membrane biogenesis; enterobacterial common antigen biosynthesis. Probably involved in the polymerization of enterobacterial common antigen (ECA) trisaccharide repeat units. This chain is Probable ECA polymerase, found in Erwinia tasmaniensis (strain DSM 17950 / CFBP 7177 / CIP 109463 / NCPPB 4357 / Et1/99).